We begin with the raw amino-acid sequence, 805 residues long: Mediator of RNA polymerase II transcription subunit 25 (805 aa).

Disordered regions lie at residues 308–332 (NQMP…PQNT) and 647–691 (QQPQ…NPQL). The segment covering 647–678 (QQPQQAASQAPPQATQTTVQAPGQPQNPQPGA) has biased composition (low complexity). An LXXLL motif motif is present at residues 691–695 (LRNLL).

This sequence belongs to the Mediator complex subunit 25 family. Component of the Mediator complex.

Its subcellular location is the nucleus. Its function is as follows. Component of the Mediator complex, a coactivator involved in the regulated transcription of nearly all RNA polymerase II-dependent genes. Mediator functions as a bridge to convey information from gene-specific regulatory proteins to the basal RNA polymerase II transcription machinery. Mediator is recruited to promoters by direct interactions with regulatory proteins and serves as a scaffold for the assembly of a functional preinitiation complex with RNA polymerase II and the general transcription factors. This Xenopus tropicalis (Western clawed frog) protein is Mediator of RNA polymerase II transcription subunit 25 (med25).